Reading from the N-terminus, the 102-residue chain is NADH-quinone oxidoreductase subunit K (102 aa).

3 helical membrane passes run 5 to 25, 31 to 51, and 62 to 82; these read LAHY…GIFL, IILL…FVAF, and VFVF…LAIL.

This sequence belongs to the complex I subunit 4L family. NDH-1 is composed of 14 different subunits. Subunits NuoA, H, J, K, L, M, N constitute the membrane sector of the complex.

The protein resides in the cell inner membrane. It catalyses the reaction a quinone + NADH + 5 H(+)(in) = a quinol + NAD(+) + 4 H(+)(out). Functionally, NDH-1 shuttles electrons from NADH, via FMN and iron-sulfur (Fe-S) centers, to quinones in the respiratory chain. The immediate electron acceptor for the enzyme in this species is believed to be ubiquinone. Couples the redox reaction to proton translocation (for every two electrons transferred, four hydrogen ions are translocated across the cytoplasmic membrane), and thus conserves the redox energy in a proton gradient. The chain is NADH-quinone oxidoreductase subunit K from Bordetella avium (strain 197N).